The sequence spans 353 residues: UPF0283 membrane protein YcjF (353 aa).

3 helical membrane-spanning segments follow: residues 70 to 90, 100 to 120, and 213 to 233; these read MVMG…VQWT, VALG…GSVV, and ESTL…FIAW.

This sequence belongs to the UPF0283 family.

The protein localises to the cell inner membrane. The polypeptide is UPF0283 membrane protein YcjF (Escherichia coli O45:K1 (strain S88 / ExPEC)).